Reading from the N-terminus, the 348-residue chain is Succinylglutamate desuccinylase (348 aa).

His-64, Glu-67, and His-164 together coordinate Zn(2+). Glu-228 is a catalytic residue.

This sequence belongs to the AspA/AstE family. Succinylglutamate desuccinylase subfamily. Requires Zn(2+) as cofactor.

It carries out the reaction N-succinyl-L-glutamate + H2O = L-glutamate + succinate. It functions in the pathway amino-acid degradation; L-arginine degradation via AST pathway; L-glutamate and succinate from L-arginine: step 5/5. In terms of biological role, transforms N(2)-succinylglutamate into succinate and glutamate. The chain is Succinylglutamate desuccinylase from Shewanella amazonensis (strain ATCC BAA-1098 / SB2B).